Here is a 290-residue protein sequence, read N- to C-terminus: Small ribosomal subunit biogenesis GTPase RsgA (290 aa).

In terms of domain architecture, CP-type G spans 62 to 213 (KNSLVRPPIV…IADTPGFSSL (152 aa)). Residues 111 to 114 (SKMD) and 156 to 164 (GQTGVGKST) each bind GTP. Residues Cys237, Cys242, His244, and Cys250 each contribute to the Zn(2+) site.

It belongs to the TRAFAC class YlqF/YawG GTPase family. RsgA subfamily. Monomer. Associates with 30S ribosomal subunit, binds 16S rRNA. Requires Zn(2+) as cofactor.

It is found in the cytoplasm. Its function is as follows. One of several proteins that assist in the late maturation steps of the functional core of the 30S ribosomal subunit. Helps release RbfA from mature subunits. May play a role in the assembly of ribosomal proteins into the subunit. Circularly permuted GTPase that catalyzes slow GTP hydrolysis, GTPase activity is stimulated by the 30S ribosomal subunit. The sequence is that of Small ribosomal subunit biogenesis GTPase RsgA from Streptococcus pyogenes serotype M6 (strain ATCC BAA-946 / MGAS10394).